The sequence spans 73 residues: Venom peptide La1 (73 aa).

Lysine 73 carries the lysine amide modification.

It belongs to the scorpion La1-like peptide family. Post-translationally, contains 4 disulfide bonds. As to expression, expressed by the venom gland.

The protein resides in the secreted. Not toxic to insect. In Liocheles australasiae (Dwarf wood scorpion), this protein is Venom peptide La1.